Reading from the N-terminus, the 475-residue chain is Tubulin epsilon chain (475 aa).

Residue 148-154 (GGGTGSG) participates in GTP binding.

The protein belongs to the tubulin family. Found in a complex with TEDC1, TEDC2, TUBE1 and TUBD1.

It is found in the cytoplasm. It localises to the cytoskeleton. The protein localises to the microtubule organizing center. The protein resides in the centrosome. The polypeptide is Tubulin epsilon chain (TUBE1) (Homo sapiens (Human)).